Consider the following 262-residue polypeptide: Sperm microtubule inner protein 6 (262 aa).

Belongs to the SPMIP6 family. In terms of assembly, microtubule inner protein component of sperm flagellar doublet microtubules. Interacts with alpha-tubulin.

It is found in the cytoplasm. The protein resides in the cytoskeleton. The protein localises to the nucleus. It localises to the mitochondrion. Its subcellular location is the flagellum axoneme. Functionally, may participate in intramanchette transport and midpiece formation of the sperm tail. May play a potential role in somatic cell proliferation. This Macaca fascicularis (Crab-eating macaque) protein is Sperm microtubule inner protein 6 (SPMIP6).